The primary structure comprises 476 residues: Adenosylhomocysteinase (476 aa).

3 residues coordinate substrate: T61, D140, and E200. T201–T203 contacts NAD(+). Substrate is bound by residues K230 and D234. NAD(+)-binding positions include N235, G264 to G269, E287, N322, I343 to H345, and N389.

This sequence belongs to the adenosylhomocysteinase family. NAD(+) is required as a cofactor.

The protein localises to the cytoplasm. The enzyme catalyses S-adenosyl-L-homocysteine + H2O = L-homocysteine + adenosine. It functions in the pathway amino-acid biosynthesis; L-homocysteine biosynthesis; L-homocysteine from S-adenosyl-L-homocysteine: step 1/1. In terms of biological role, may play a key role in the regulation of the intracellular concentration of adenosylhomocysteine. This is Adenosylhomocysteinase from Acidovorax ebreus (strain TPSY) (Diaphorobacter sp. (strain TPSY)).